The primary structure comprises 89 residues: UPF0367 protein CYB_2632 (89 aa).

A disordered region spans residues 69-89; it reads SKSGSASPMGTRPGFLAQLQS.

Belongs to the UPF0367 family.

This is UPF0367 protein CYB_2632 from Synechococcus sp. (strain JA-2-3B'a(2-13)) (Cyanobacteria bacterium Yellowstone B-Prime).